Consider the following 460-residue polypeptide: Argininosuccinate lyase (460 aa).

This sequence belongs to the lyase 1 family. Argininosuccinate lyase subfamily.

It localises to the cytoplasm. The enzyme catalyses 2-(N(omega)-L-arginino)succinate = fumarate + L-arginine. The protein operates within amino-acid biosynthesis; L-arginine biosynthesis; L-arginine from L-ornithine and carbamoyl phosphate: step 3/3. The chain is Argininosuccinate lyase from Actinobacillus succinogenes (strain ATCC 55618 / DSM 22257 / CCUG 43843 / 130Z).